A 184-amino-acid polypeptide reads, in one-letter code: Large ribosomal subunit protein eL18 (184 aa).

This sequence belongs to the eukaryotic ribosomal protein eL18 family.

The protein localises to the cytoplasm. The polypeptide is Large ribosomal subunit protein eL18 (RPL18) (Theileria parva (East coast fever infection agent)).